Here is a 208-residue protein sequence, read N- to C-terminus: MIFPCLFQSMLNLYAEALSTFSLLFEEAKSSSEIEPDAMMLATASLEGHPSVRTVLLKKFDARGFVFYSHIDSPKGRDLQANPQAALLFLWRSLREAGVQVRIEGRVQQVLAEEADAYFASRPRQSQIGAWASMQSCPLGSPEEFQARLAEVKATFEGRDVPRPEGWVGFRVAPRVLEFWYGARFRLHERWRYEVDAAGYWRKFLLYP.

Residues 53 to 58, 68 to 69, Lys75, and Gln100 each bind FMN; these read RTVLLK and YS. Lys58 serves as a coordination point for substrate. Substrate contacts are provided by Tyr118, Arg122, and Ser126. FMN-binding positions include 135 to 136 and Trp180; that span reads QS. 186–188 is a substrate binding site; the sequence is RLH. Arg190 contacts FMN.

Belongs to the pyridoxamine 5'-phosphate oxidase family. Homodimer. Requires FMN as cofactor.

It carries out the reaction pyridoxamine 5'-phosphate + O2 + H2O = pyridoxal 5'-phosphate + H2O2 + NH4(+). It catalyses the reaction pyridoxine 5'-phosphate + O2 = pyridoxal 5'-phosphate + H2O2. It participates in cofactor metabolism; pyridoxal 5'-phosphate salvage; pyridoxal 5'-phosphate from pyridoxamine 5'-phosphate: step 1/1. The protein operates within cofactor metabolism; pyridoxal 5'-phosphate salvage; pyridoxal 5'-phosphate from pyridoxine 5'-phosphate: step 1/1. Its function is as follows. Catalyzes the oxidation of either pyridoxine 5'-phosphate (PNP) or pyridoxamine 5'-phosphate (PMP) into pyridoxal 5'-phosphate (PLP). This Xylella fastidiosa (strain 9a5c) protein is Pyridoxine/pyridoxamine 5'-phosphate oxidase.